The sequence spans 311 residues: tRNA-cytidine(32) 2-sulfurtransferase (311 aa).

A PP-loop motif motif is present at residues 47–52; sequence SGGKDS. The [4Fe-4S] cluster site is built by Cys-122, Cys-125, and Cys-213.

Belongs to the TtcA family. In terms of assembly, homodimer. The cofactor is Mg(2+). [4Fe-4S] cluster serves as cofactor.

It localises to the cytoplasm. The enzyme catalyses cytidine(32) in tRNA + S-sulfanyl-L-cysteinyl-[cysteine desulfurase] + AH2 + ATP = 2-thiocytidine(32) in tRNA + L-cysteinyl-[cysteine desulfurase] + A + AMP + diphosphate + H(+). It functions in the pathway tRNA modification. In terms of biological role, catalyzes the ATP-dependent 2-thiolation of cytidine in position 32 of tRNA, to form 2-thiocytidine (s(2)C32). The sulfur atoms are provided by the cysteine/cysteine desulfurase (IscS) system. The sequence is that of tRNA-cytidine(32) 2-sulfurtransferase from Escherichia coli (strain 55989 / EAEC).